The chain runs to 314 residues: Protein SPOROCYTELESS (314 aa).

A compositionally biased stretch (polar residues) spans methionine 1 to asparagine 17. Disordered stretches follow at residues methionine 1 to aspartate 20 and glycine 33 to arginine 62. Positions arginine 62–glutamate 70 match the SPL motif. The EAR motif lies at isoleucine 308–leucine 314.

This sequence belongs to the NOZZLE family. Homodimer and heterodimer with SPEARs. Interacts in vitro with YAB1, YAB3 and YAB4. Interacts (via EAR motif) with TPL, TPR1, TPR2, TPR3 and TPR4. Interacts with SPEAR1, SPEAR2, SPEAR3, SPEAR4, TCP1, TCP6, TCP8, TCP9, TCP11, TCP15, TCP20, TCP21 and TCP23. Interacts with TCP2, TCP3, TCP4, TCP5, TCP10, TCP13, TCP17 and TCP24. In terms of tissue distribution, expressed in flower buds. Not found in leaves, siliques and stems. Detected in rosette leaves, stem tissue and seedlings.

Its subcellular location is the nucleus. Transcriptional regulator of sporocyte development. Acts as an adapter-like transcriptional repressor recruiting TPL/TPR corepressors to inhibit TCP transcription factors. Required for nucellus and embryo sac development. Plays a central role in patterning both the proximal-distal and the adaxial-abaxial axes during ovule development. Involved in establishing the prospective chalaza of the ovule and in controlling the cell number and the length of the funiculus, and is required for the development of the integuments. Required, with BEL1, for cytokinin-induced PIN1 expression in ovules. Involved in controlling stamen identity. May also regulate the morphology of lateral organs by repressing auxin production. In Arabidopsis thaliana (Mouse-ear cress), this protein is Protein SPOROCYTELESS.